We begin with the raw amino-acid sequence, 1072 residues long: Error-prone DNA polymerase (1072 aa).

Belongs to the DNA polymerase type-C family. DnaE2 subfamily.

The protein resides in the cytoplasm. The catalysed reaction is DNA(n) + a 2'-deoxyribonucleoside 5'-triphosphate = DNA(n+1) + diphosphate. Functionally, DNA polymerase involved in damage-induced mutagenesis and translesion synthesis (TLS). It is not the major replicative DNA polymerase. This chain is Error-prone DNA polymerase, found in Burkholderia pseudomallei (strain K96243).